A 560-amino-acid chain; its full sequence is 2-succinyl-5-enolpyruvyl-6-hydroxy-3-cyclohexene-1-carboxylate synthase (560 aa).

It belongs to the TPP enzyme family. MenD subfamily. Homodimer. Requires Mg(2+) as cofactor. It depends on Mn(2+) as a cofactor. The cofactor is thiamine diphosphate.

The catalysed reaction is isochorismate + 2-oxoglutarate + H(+) = 5-enolpyruvoyl-6-hydroxy-2-succinyl-cyclohex-3-ene-1-carboxylate + CO2. The protein operates within quinol/quinone metabolism; 1,4-dihydroxy-2-naphthoate biosynthesis; 1,4-dihydroxy-2-naphthoate from chorismate: step 2/7. It participates in quinol/quinone metabolism; menaquinone biosynthesis. In terms of biological role, catalyzes the thiamine diphosphate-dependent decarboxylation of 2-oxoglutarate and the subsequent addition of the resulting succinic semialdehyde-thiamine pyrophosphate anion to isochorismate to yield 2-succinyl-5-enolpyruvyl-6-hydroxy-3-cyclohexene-1-carboxylate (SEPHCHC). The protein is 2-succinyl-5-enolpyruvyl-6-hydroxy-3-cyclohexene-1-carboxylate synthase of Lactococcus lactis subsp. lactis (strain IL1403) (Streptococcus lactis).